A 209-amino-acid polypeptide reads, in one-letter code: Ribosomal RNA large subunit methyltransferase E (209 aa).

Residues Gly63, Trp65, Asp83, Asp99, and Asp124 each contribute to the S-adenosyl-L-methionine site. Lys164 (proton acceptor) is an active-site residue.

This sequence belongs to the class I-like SAM-binding methyltransferase superfamily. RNA methyltransferase RlmE family.

It localises to the cytoplasm. It carries out the reaction uridine(2552) in 23S rRNA + S-adenosyl-L-methionine = 2'-O-methyluridine(2552) in 23S rRNA + S-adenosyl-L-homocysteine + H(+). Specifically methylates the uridine in position 2552 of 23S rRNA at the 2'-O position of the ribose in the fully assembled 50S ribosomal subunit. The protein is Ribosomal RNA large subunit methyltransferase E of Shigella dysenteriae serotype 1 (strain Sd197).